A 307-amino-acid polypeptide reads, in one-letter code: Woronin sorting complex protein (307 aa).

3 helical membrane passes run 106 to 125 (MATYGALVSAPLGHFLIWIL), 146 to 167 (NLIVAPIQNSVYLVAMAIIAGA), and 207 to 227 (AWMPFFNLVSFFIGTYINYIT). Basic and acidic residues predominate over residues 241-264 (GDGAHGDHRHDRERERDRERERHS). Residues 241 to 307 (GDGAHGDHRH…YPSLGQNPRY (67 aa)) are disordered. The span at 266–278 (PPHGHGPSHGGRP) shows a compositional bias: low complexity.

It belongs to the peroxisomal membrane protein PXMP2/4 family. In terms of assembly, self-assembles into detergent-resistant oligomers and forms a complex with hex-1 assemblies.

Its subcellular location is the peroxisome membrane. It is found in the cell septum. In terms of biological role, woronin sorting complex protein involved in both Woronin bodies (WB) formation and inherence. Localizes to large peroxisome membranes where it self-assembles into detergent-resistant oligomers that envelop hex-1 assemblies, producing asymmetrical nascent WBs. These structures are then delivered to the cell cortex, which permits partitioning of the nascent WB and WB inheritance. This is Woronin sorting complex protein from Neurospora crassa (strain ATCC 24698 / 74-OR23-1A / CBS 708.71 / DSM 1257 / FGSC 987).